Reading from the N-terminus, the 199-residue chain is Dephospho-CoA kinase (199 aa).

The 197-residue stretch at 3–199 (ILGLTGSIGM…EVVKMPQRRA (197 aa)) folds into the DPCK domain. Residue 11–16 (GMGKST) coordinates ATP.

The protein belongs to the CoaE family.

The protein localises to the cytoplasm. The enzyme catalyses 3'-dephospho-CoA + ATP = ADP + CoA + H(+). Its pathway is cofactor biosynthesis; coenzyme A biosynthesis; CoA from (R)-pantothenate: step 5/5. In terms of biological role, catalyzes the phosphorylation of the 3'-hydroxyl group of dephosphocoenzyme A to form coenzyme A. The sequence is that of Dephospho-CoA kinase from Bradyrhizobium diazoefficiens (strain JCM 10833 / BCRC 13528 / IAM 13628 / NBRC 14792 / USDA 110).